Here is a 492-residue protein sequence, read N- to C-terminus: UDP-N-acetylmuramyl-tripeptide synthetase 2 (492 aa).

Position 30 (Ser-30) interacts with UDP-N-acetyl-alpha-D-muramoyl-L-alanyl-D-glutamate. An ATP-binding site is contributed by Gly-111–Thr-117. Residues Thr-154–Thr-155, Ser-181, Gln-187, and Arg-189 each bind UDP-N-acetyl-alpha-D-muramoyl-L-alanyl-D-glutamate. Lys-221 is subject to N6-carboxylysine.

This sequence belongs to the MurCDEF family. MurE subfamily. In terms of processing, carboxylation is probably crucial for Mg(2+) binding and, consequently, for the gamma-phosphate positioning of ATP.

Its subcellular location is the cytoplasm. The protein operates within cell wall biogenesis; peptidoglycan biosynthesis. Catalyzes the addition of an amino acid to the nucleotide precursor UDP-N-acetylmuramoyl-L-alanyl-D-glutamate (UMAG) in the biosynthesis of bacterial cell-wall peptidoglycan. The protein is UDP-N-acetylmuramyl-tripeptide synthetase 2 of Oceanobacillus iheyensis (strain DSM 14371 / CIP 107618 / JCM 11309 / KCTC 3954 / HTE831).